The sequence spans 142 residues: UPF0332 protein PH1297 (142 aa).

The protein belongs to the UPF0332 family.

The polypeptide is UPF0332 protein PH1297 (Pyrococcus horikoshii (strain ATCC 700860 / DSM 12428 / JCM 9974 / NBRC 100139 / OT-3)).